Reading from the N-terminus, the 814-residue chain is Acyl-coenzyme A dehydrogenase (814 aa).

E497 (proton acceptor) is an active-site residue.

It belongs to the acyl-CoA dehydrogenase family. FAD serves as cofactor.

It catalyses the reaction a medium-chain 2,3-saturated fatty acyl-CoA + oxidized [electron-transfer flavoprotein] + H(+) = a medium-chain (2E)-enoyl-CoA + reduced [electron-transfer flavoprotein]. It carries out the reaction a long-chain 2,3-saturated fatty acyl-CoA + oxidized [electron-transfer flavoprotein] + H(+) = a long-chain (2E)-enoyl-CoA + reduced [electron-transfer flavoprotein]. It functions in the pathway lipid metabolism; fatty acid beta-oxidation. Functionally, catalyzes the dehydrogenation of acyl-coenzymes A (acyl-CoAs) to 2-enoyl-CoAs, the first step of the beta-oxidation cycle of fatty acid degradation. Is required for the utilization of medium- and long-chain fatty acids as sole carbon sources for growth. Is needed for bacterial survival during carbone-source starvation. The chain is Acyl-coenzyme A dehydrogenase (fadE) from Salmonella typhi.